The following is a 197-amino-acid chain: Probable UbiX-like flavin prenyltransferase (197 aa).

FMN contacts are provided by residues 9 to 11 (GAT), S36, 87 to 90 (SMKT), and R122.

The protein belongs to the UbiX/PAD1 family. YclB subfamily. In terms of assembly, homododecamer.

The enzyme catalyses dimethylallyl phosphate + FMNH2 = prenylated FMNH2 + phosphate. Functionally, flavin prenyltransferase that catalyzes the synthesis of the prenylated FMN cofactor (prenyl-FMN) for phenolic acid decarboxylase C. Involved in the decarboxylation and detoxification of phenolic derivatives under both aerobic and anaerobic conditions. This is Probable UbiX-like flavin prenyltransferase (ecdB) from Escherichia coli O111:H-.